Reading from the N-terminus, the 133-residue chain is Small ribosomal subunit protein uS9 (133 aa).

Basic and acidic residues predominate over residues 102 to 113; the sequence is KVEGYLSRDPRA. The tract at residues 102 to 133 is disordered; sequence KVEGYLSRDPRAKERRKYGLKKARKAPQFSKR. Basic residues predominate over residues 114–133; the sequence is KERRKYGLKKARKAPQFSKR.

Belongs to the universal ribosomal protein uS9 family.

The polypeptide is Small ribosomal subunit protein uS9 (Gloeobacter violaceus (strain ATCC 29082 / PCC 7421)).